The sequence spans 684 residues: MSNPKRKILVTCALPYANGAIHLGHMLEHIQADIWVRFQRMRGNEIHFVCADDAHGTPIMLNADKLGITPEQLIEKAKADHIADFAGFNISFDNYHSTHSEENREYTSAIYKKLKANGFIKSKVISQLFDPEKNMFLPDRFVKGTCPKCKAEDQYGDNCEVCASTYSPMDLINPRSVVSGSTPVVKQSEHFFFDLPSFEEMLKAWTRSGSLQPEIANKVQEWFESGLQQWDISRDAPYFGFEIPDSENKFFYVWLDAPIGYMASFKNLCDRTGLNFDDFWKKESDAELYHFIGKDIVYFHSLFWPAMLEGSEYRKPTNVFAHGYVTVDGQKMSKSRGTFIQASTYLKHIDPECLRYYYAAKLNDRIEDLDFNLEDFVQRVNSDIVNKLVNLASRTAGFITKRFEGKLASTLENQALFDEFVAQSEQIATYFETREYNKAIREIMALTDKANKYIDDKAPWVIAKEEGTDAELQAVCSMGLELFRVLMSYLKPVLPKLAERAEAFLQTELRWDNIGSPLFAHSIAPFKSLFSRLEKKQIDAVIEETKALFAESVKAETAKKGKEMTACETKVEPIAPEITIDDFAKLDLRVAKVLKCEAVPKSDKLLRFELDLGDHTRQVFSGIKAAYSQPEELEGRFVIMIANLAPRKMSFGMSEGMILSAGTGGADLYLLSADSGVTAGMQVR.

The 'HIGH' region signature appears at 15-25 (PYANGAIHLGH). Positions 146, 149, 159, and 162 each coordinate Zn(2+). The 'KMSKS' region signature appears at 331–335 (KMSKS). An ATP-binding site is contributed by lysine 334. Residues 582 to 684 (DFAKLDLRVA…SGVTAGMQVR (103 aa)) form the tRNA-binding domain.

Belongs to the class-I aminoacyl-tRNA synthetase family. MetG type 1 subfamily. As to quaternary structure, homodimer. Zn(2+) serves as cofactor.

The protein localises to the cytoplasm. The enzyme catalyses tRNA(Met) + L-methionine + ATP = L-methionyl-tRNA(Met) + AMP + diphosphate. Its function is as follows. Is required not only for elongation of protein synthesis but also for the initiation of all mRNA translation through initiator tRNA(fMet) aminoacylation. The protein is Methionine--tRNA ligase of Glaesserella parasuis serovar 5 (strain SH0165) (Haemophilus parasuis).